We begin with the raw amino-acid sequence, 71 residues long: Large ribosomal subunit protein uL29 (71 aa).

The protein belongs to the universal ribosomal protein uL29 family.

This chain is Large ribosomal subunit protein uL29 (rpl29), found in Halobacterium salinarum (strain ATCC 700922 / JCM 11081 / NRC-1) (Halobacterium halobium).